Here is a 213-residue protein sequence, read N- to C-terminus: E3 ubiquitin-protein ligase NleG8 (213 aa).

Residues 136–189 (CPITLCVPETGVFVKNARCSKVCSLYDISALTEMLRRNASHPLSREAFTPGMIV) are RING/U-box domain. Residues 211 to 213 (TRL) carry the PDZ-binding motif motif.

It belongs to the NleG E3 ligase family. In terms of assembly, interacts with host GOPC (human protein).

The protein localises to the secreted. It is found in the host cytoplasm. It carries out the reaction S-ubiquitinyl-[E2 ubiquitin-conjugating enzyme]-L-cysteine + [acceptor protein]-L-lysine = [E2 ubiquitin-conjugating enzyme]-L-cysteine + N(6)-ubiquitinyl-[acceptor protein]-L-lysine.. Effector proteins function to alter host cell physiology and promote bacterial survival in host tissues. This protein is an E3 ubiquitin-protein ligase that probably interferes with the host's ubiquitination pathway and targets host proteins for proteasomal degradation. Mice infected with a strain of bacteria deleted for this gene had an increased survival rate. Can be ubiquitinylated, and ubiquitinate ubiquitin, giving rise to polyubiquitin chains (in vitro). This is E3 ubiquitin-protein ligase NleG8 from Citrobacter rodentium.